Here is a 118-residue protein sequence, read N- to C-terminus: UPF0344 protein RBAM_010920 (118 aa).

Transmembrane regions (helical) follow at residues 4–24 (WHIT…GLYG), 33–53 (ITHM…AELF), 62–82 (EYAG…MLVI), and 93–113 (LWIG…HLPI).

The protein belongs to the UPF0344 family.

It is found in the cell membrane. In Bacillus velezensis (strain DSM 23117 / BGSC 10A6 / LMG 26770 / FZB42) (Bacillus amyloliquefaciens subsp. plantarum), this protein is UPF0344 protein RBAM_010920.